The chain runs to 672 residues: 2,4-dienoyl-CoA reductase [(2E)-enoyl-CoA-producing] (672 aa).

Residues 25-27 (SMH), Gly59, and Gln101 each bind FMN. Catalysis depends on Tyr167, which acts as the Proton donor. Position 176 (Arg176) interacts with substrate. Residue Arg215 participates in FMN binding. Substrate is bound at residue 253 to 256 (HEAR). FMN-binding positions include Arg289 and 311-312 (AR). [4Fe-4S] cluster-binding residues include Cys335 and Cys338. Residue Gln340 participates in FAD binding. Gln340 is a binding site for NADP(+). Residues Cys342 and Cys354 each contribute to the [4Fe-4S] cluster site. Ala385, Asp404, Gln412, Lys422, and Val449 together coordinate FAD. Residue 563–564 (RK) coordinates NADP(+). Substrate-binding residues include Lys567 and Trp578. Residues Gly649 and 656-658 (LDA) each bind FAD. 654-656 (MEL) is a binding site for NADP(+).

It in the N-terminal section; belongs to the NADH:flavin oxidoreductase/NADH oxidase family. In terms of assembly, monomer. The cofactor is FMN. FAD serves as cofactor. Requires [4Fe-4S] cluster as cofactor.

The enzyme catalyses a 4,5-saturated-(2E)-enoyl-CoA + NADP(+) = a (2E,4E)-dienoyl-CoA + NADPH + H(+). It carries out the reaction a (2E,4Z)-dienoyl-CoA + NADPH + H(+) = a 4,5-saturated-(2E)-enoyl-CoA + NADP(+). It catalyses the reaction (2E)-decenoyl-CoA + NADP(+) = (2E,4E)-decadienoyl-CoA + NADPH + H(+). The catalysed reaction is (2E)-decenoyl-CoA + NADP(+) = (2E,4Z)-decadienoyl-CoA + NADPH + H(+). It functions in the pathway lipid metabolism; fatty acid beta-oxidation. With respect to regulation, is non-competitively inhibited by NADH. Its function is as follows. Functions as an auxiliary enzyme in the beta-oxidation of unsaturated fatty acids with double bonds at even carbon positions. Catalyzes the NADPH-dependent reduction of the C4-C5 double bond of the acyl chain of 2,4-dienoyl-CoA to yield 2-trans-enoyl-CoA. Acts on both isomers, 2-trans,4-cis- and 2-trans,4-trans-decadienoyl-CoA, with almost equal efficiency. Is not active with NADH instead of NADPH. Does not show cis-&gt;trans isomerase activity. The chain is 2,4-dienoyl-CoA reductase [(2E)-enoyl-CoA-producing] from Escherichia coli (strain K12).